The primary structure comprises 891 residues: Kinesin-like protein KIN-UB (891 aa).

The segment at 1 to 54 (MSGKVANATPKAAAGKPRLSAAGGGAYRRTSSGPLPSAGGGGGRASSESGVSSR) is disordered. Residues 45 to 54 (ASSESGVSSR) show a composition bias toward low complexity. The Kinesin motor domain occupies 54 to 400 (RVRVAVRLRP…IMFGQRAMKV (347 aa)). An ATP-binding site is contributed by 139–146 (GQTGTGKT). A D-BOX motif is present at residues 370–378 (RTSLVVTIG). A coiled-coil region spans residues 502-592 (TSSEVGEVQN…ADETRRSLDR (91 aa)). Residues 586–595 (TRRSLDRGDG) are compositionally biased toward basic and acidic residues. A disordered region spans residues 586-626 (TRRSLDRGDGSGKIFPGFDSLMSHSRNSQPREQSNGPKPPI). Residues 607–621 (MSHSRNSQPREQSNG) are compositionally biased toward polar residues. ARM repeat units lie at residues 623-662 (KPPI…NLAA), 664-704 (EANQ…NLAM), 706-746 (ETNQ…NLCG), and 748-787 (DKLQ…NFAK).

The protein belongs to the TRAFAC class myosin-kinesin ATPase superfamily. Kinesin family. Ungrouped subfamily.

The protein localises to the cytoplasm. Its subcellular location is the cytoskeleton. The protein is Kinesin-like protein KIN-UB of Oryza sativa subsp. japonica (Rice).